The sequence spans 423 residues: Histidine--tRNA ligase (423 aa).

It belongs to the class-II aminoacyl-tRNA synthetase family. As to quaternary structure, homodimer.

The protein resides in the cytoplasm. It catalyses the reaction tRNA(His) + L-histidine + ATP = L-histidyl-tRNA(His) + AMP + diphosphate + H(+). The sequence is that of Histidine--tRNA ligase from Rhodococcus erythropolis (strain PR4 / NBRC 100887).